Here is a 206-residue protein sequence, read N- to C-terminus: Pyridoxine/pyridoxamine 5'-phosphate oxidase (206 aa).

FMN-binding positions include 53–58, 68–69, Lys-75, and Gln-97; these read RMVLLK and YT. Substrate is bound at residue Lys-58. Positions 115, 119, and 123 each coordinate substrate. FMN is bound by residues 132-133 and Trp-177; that span reads QS. Residue 183 to 185 coordinates substrate; it reads RLH. Arg-187 provides a ligand contact to FMN.

Belongs to the pyridoxamine 5'-phosphate oxidase family. As to quaternary structure, homodimer. Requires FMN as cofactor.

The catalysed reaction is pyridoxamine 5'-phosphate + O2 + H2O = pyridoxal 5'-phosphate + H2O2 + NH4(+). It carries out the reaction pyridoxine 5'-phosphate + O2 = pyridoxal 5'-phosphate + H2O2. The protein operates within cofactor metabolism; pyridoxal 5'-phosphate salvage; pyridoxal 5'-phosphate from pyridoxamine 5'-phosphate: step 1/1. It functions in the pathway cofactor metabolism; pyridoxal 5'-phosphate salvage; pyridoxal 5'-phosphate from pyridoxine 5'-phosphate: step 1/1. Its function is as follows. Catalyzes the oxidation of either pyridoxine 5'-phosphate (PNP) or pyridoxamine 5'-phosphate (PMP) into pyridoxal 5'-phosphate (PLP). The chain is Pyridoxine/pyridoxamine 5'-phosphate oxidase from Rhizobium etli (strain CIAT 652).